Reading from the N-terminus, the 145-residue chain is Small ribosomal subunit protein uS12 (145 aa).

This sequence belongs to the universal ribosomal protein uS12 family. In terms of assembly, component of the small ribosomal subunit. Mature ribosomes consist of a small (40S) and a large (60S) subunit. The 40S subunit contains about 32 different proteins and 1 molecule of RNA (18S). The 60S subunit contains 45 different proteins and 3 molecules of RNA (25S, 5.8S and 5S).

It is found in the cytoplasm. Its function is as follows. Component of the ribosome, a large ribonucleoprotein complex responsible for the synthesis of proteins in the cell. The small ribosomal subunit (SSU) binds messenger RNAs (mRNAs) and translates the encoded message by selecting cognate aminoacyl-transfer RNA (tRNA) molecules. The large subunit (LSU) contains the ribosomal catalytic site termed the peptidyl transferase center (PTC), which catalyzes the formation of peptide bonds, thereby polymerizing the amino acids delivered by tRNAs into a polypeptide chain. The nascent polypeptides leave the ribosome through a tunnel in the LSU and interact with protein factors that function in enzymatic processing, targeting, and the membrane insertion of nascent chains at the exit of the ribosomal tunnel. The sequence is that of Small ribosomal subunit protein uS12 (RPS23A) from Candida albicans (strain SC5314 / ATCC MYA-2876) (Yeast).